We begin with the raw amino-acid sequence, 96 residues long: MSQIMYNYPAMLGHAGDMAGYAGTLQSLGAEIAVEQAALQSAWQGDTGITYQAWQAQWNQAMEDLVRAYHAMSSTHEANTMAMMARDTAEAAKWGG.

H14, H70, H76, and E77 together coordinate Zn(2+).

Belongs to the WXG100 family. ESAT-6 subfamily. In terms of assembly, forms a tight 1:1 complex with EsxG. When it is complexed to EsxG, interacts directly with host HGS/HRS.

The protein resides in the secreted. Its function is as follows. EsxH, in complex with EsxG, disrupts ESCRT function and impairs host phagosome maturation, thereby promoting intracellular bacterial growth. The complex acts by interacting, via EsxH, with the host hepatocyte growth factor-regulated tyrosine kinase substrate (HGS/HRS), a component of the ESCRT machinery. The chain is ESAT-6-like protein EsxH from Mycobacterium tuberculosis (strain ATCC 25618 / H37Rv).